The chain runs to 508 residues: Protein adenylyltransferase fic-1 (508 aa).

Residues 44–64 (TVIIISVLVSLICQHFVPYAV) traverse the membrane as a helical segment. 2 TPR repeats span residues 147–180 (AILAAKAAGRSRKDGNLERAMTIMEHAMALAPTN) and 181–214 (PQILIEMGQIREMHNELVEADQCYVKALAYDPGN). Positions 270 to 275 (TVAIEG) match the Inhibitory (S/T)XXXE(G/N) motif motif. Residue E274 participates in ATP binding. The Fido domain occupies 326-461 (ISIDDILEMH…LRPFVRYVAK (136 aa)). Residue T352 is modified to O-AMP-threonine; by autocatalysis. 357-360 (VGRF) contributes to the ATP binding site. The active site involves H404. ATP-binding positions include 408–415 (DGNGRTAR), 440–441 (YY), and N448. T476 is subject to O-AMP-threonine; by autocatalysis. Residues 482-508 (LNSGDSKLTPEESEVSEKIEAECRAGN) are disordered. Basic and acidic residues predominate over residues 496 to 508 (VSEKIEAECRAGN).

The protein belongs to the fic family. As to quaternary structure, forms homodimers; homodimerization might be required for adenylyltransferase activity. In terms of tissue distribution, ubiquitously expressed, with high expression in the germline.

Its subcellular location is the endoplasmic reticulum membrane. The protein resides in the nucleus membrane. It catalyses the reaction L-tyrosyl-[protein] + ATP = O-(5'-adenylyl)-L-tyrosyl-[protein] + diphosphate. The catalysed reaction is L-threonyl-[protein] + ATP = 3-O-(5'-adenylyl)-L-threonyl-[protein] + diphosphate. It carries out the reaction 3-O-(5'-adenylyl)-L-threonyl-[protein] + H2O = L-threonyl-[protein] + AMP + H(+). Its activity is regulated as follows. The side chain of Glu-274 determines which of the two opposing activities (AMPylase or de-AMPylase) will take place. In response to endoplasmic reticulum stress, mediates de-AMPylase activity. Adenylyltransferase activity is inhibited by the inhibitory helix present at the N-terminus: Glu-274 binds ATP and competes with ATP-binding at Arg-415, thereby preventing adenylyltransferase activity. In unstressed cells, disengagement of Glu-274 promotes adenylyltransferase activity. Activation dissociates ATP-binding from Glu-274, allowing ordered binding of the entire ATP moiety with the alpha-phosphate in an orientation that is productive for accepting an incoming target hydroxyl side chain. In terms of biological role, protein that can both mediate the addition of adenosine 5'-monophosphate (AMP) to specific residues of target proteins (AMPylation), and the removal of the same modification from target proteins (de-AMPylation), depending on the context. The side chain of Glu-274 determines which of the two opposing activities (AMPylase or de-AMPylase) will take place. Adenylyltransferase that mediates the addition of adenosine 5'-monophosphate (AMP) to specific residues of target proteins. In vivo target proteins include the heat-shock 70 family proteins hsp-1 and hsp-3 and the translation elongation factors eef-1A, eef-1G and eef-2. Can AMPylate core histone H3 in vitro. Can also act as a phosphodiesterase by mediating removal of ATP (de-AMPylation) from target proteins. Decreases susceptibility to P.aeruginosa-mediated killing and might therefore play a role in the innate immune response. This chain is Protein adenylyltransferase fic-1, found in Caenorhabditis elegans.